Reading from the N-terminus, the 134-residue chain is Putative esterase PA0474 (134 aa).

This sequence belongs to the thioesterase PaaI family.

In Pseudomonas aeruginosa (strain ATCC 15692 / DSM 22644 / CIP 104116 / JCM 14847 / LMG 12228 / 1C / PRS 101 / PAO1), this protein is Putative esterase PA0474.